The primary structure comprises 653 residues: Sodium-dependent phosphate transporter 2 (653 aa).

Residue Met1 is a topological domain, extracellular. Residues 2–22 form a helical membrane-spanning segment; that stretch reads VLVEYLWMVIVGFIIAFILAF. Residues 23–46 lie on the Cytoplasmic side of the membrane; the sequence is SVGANDVANSFGTAVGSGVVTLRQ. A helical transmembrane segment spans residues 47–67; that stretch reads ACILASIFETTGSVLLGAKVG. Residues 68–86 lie on the Extracellular side of the membrane; the sequence is ETIRKGIIDVNLYNNTVDL. An N-linked (GlcNAc...) asparagine glycan is attached at Asn81. The helical transmembrane segment at 87 to 107 threads the bilayer; sequence LMAGEVSAMVGSAVWQLIASF. Residues 108-109 are Cytoplasmic-facing; that stretch reads LR. The chain crosses the membrane as a helical span at residues 110–130; the sequence is LPISGTHCIVGATIGFSLVAI. The Extracellular portion of the chain corresponds to 131–142; the sequence is GTHGVQWMQLVK. The chain crosses the membrane as a helical span at residues 143–163; sequence IVASWFISPLLSGLMSGALFL. Topologically, residues 164–187 are cytoplasmic; sequence MIKFFILKKEDPVPNGLKALPVFY. A helical transmembrane segment spans residues 188 to 208; that stretch reads AATIGINVFSILYTGAPLLGL. Over 209–217 the chain is Extracellular; that stretch reads ESFPVWATA. Residues 218–238 traverse the membrane as a helical segment; that stretch reads LLSIGIAIIFALIVWFFVCPW. The Cytoplasmic segment spans residues 239–483; it reads MKKKIASRLK…EDKEEKDKSE (245 aa). Residues 484–504 form a helical membrane-spanning segment; that stretch reads VHLLFHFLQILTACFGSFAHG. Topologically, residues 505 to 532 are extracellular; sequence GNDVSNAIGPLVALWLIYEQGGVMQEAS. Residues 533–553 form a helical membrane-spanning segment; that stretch reads TPVWLLLYGGVGICAGLWVWG. Residues 554 to 572 are Cytoplasmic-facing; sequence RRVIQTMGKDLTPITPSSG. A helical transmembrane segment spans residues 573–587; that stretch reads FTIELASAFTVVVAS. Over 588 to 594 the chain is Extracellular; sequence NIGLPIS. A helical transmembrane segment spans residues 595–610; it reads TTHCKVGSVVAVGWIR. Over 611 to 622 the chain is Cytoplasmic; sequence SRKAVDWRLFRN. Residues 623 to 643 traverse the membrane as a helical segment; it reads IFLAWFVTVPVAGLFSAGVMA. Topologically, residues 644–653 are extracellular; it reads ILQYGILPYV.

It belongs to the inorganic phosphate transporter (PiT) (TC 2.A.20) family. In terms of assembly, homodimer.

Its subcellular location is the cell membrane. It localises to the apical cell membrane. It catalyses the reaction 2 Na(+)(out) + phosphate(out) = 2 Na(+)(in) + phosphate(in). In terms of biological role, sodium-phosphate symporter which preferentially transports the monovalent form of phosphate with a stoichiometry of two sodium ions per phosphate ion. The sequence is that of Sodium-dependent phosphate transporter 2 (slc20a2) from Xenopus tropicalis (Western clawed frog).